A 511-amino-acid chain; its full sequence is ATP synthase subunit alpha (511 aa).

170–177 is a binding site for ATP; the sequence is GDRQTGKT.

Belongs to the ATPase alpha/beta chains family. In terms of assembly, F-type ATPases have 2 components, CF(1) - the catalytic core - and CF(0) - the membrane proton channel. CF(1) has five subunits: alpha(3), beta(3), gamma(1), delta(1), epsilon(1). CF(0) has three main subunits: a(1), b(2) and c(9-12). The alpha and beta chains form an alternating ring which encloses part of the gamma chain. CF(1) is attached to CF(0) by a central stalk formed by the gamma and epsilon chains, while a peripheral stalk is formed by the delta and b chains.

The protein localises to the cell inner membrane. It carries out the reaction ATP + H2O + 4 H(+)(in) = ADP + phosphate + 5 H(+)(out). Produces ATP from ADP in the presence of a proton gradient across the membrane. The alpha chain is a regulatory subunit. The polypeptide is ATP synthase subunit alpha (Pelagibacter ubique (strain HTCC1062)).